Consider the following 356-residue polypeptide: D-alanine--D-alanine ligase (356 aa).

The 206-residue stretch at 134–339 (KQLFEHRGLP…YPELITKLIE (206 aa)) folds into the ATP-grasp domain. 167-222 (NDKLNYPVFVKPANLGSSVGISKCNNEAELKEGIKEAFQFDRKLVIEQGVNAREIE) lines the ATP pocket. Mg(2+)-binding residues include Asp293, Glu306, and Asn308.

Belongs to the D-alanine--D-alanine ligase family. The cofactor is Mg(2+). Mn(2+) serves as cofactor.

The protein resides in the cytoplasm. It catalyses the reaction 2 D-alanine + ATP = D-alanyl-D-alanine + ADP + phosphate + H(+). It participates in cell wall biogenesis; peptidoglycan biosynthesis. Functionally, cell wall formation. The protein is D-alanine--D-alanine ligase of Staphylococcus aureus (strain Mu3 / ATCC 700698).